Consider the following 660-residue polypeptide: DNA mismatch repair protein MutL (660 aa).

The protein belongs to the DNA mismatch repair MutL/HexB family.

Its function is as follows. This protein is involved in the repair of mismatches in DNA. It is required for dam-dependent methyl-directed DNA mismatch repair. May act as a 'molecular matchmaker', a protein that promotes the formation of a stable complex between two or more DNA-binding proteins in an ATP-dependent manner without itself being part of a final effector complex. This Streptococcus pyogenes serotype M12 (strain MGAS2096) protein is DNA mismatch repair protein MutL.